Consider the following 499-residue polypeptide: L-arabinose isomerase (499 aa).

4 residues coordinate Mn(2+): Glu-306, Glu-333, His-350, and His-449.

Belongs to the arabinose isomerase family. It depends on Mn(2+) as a cofactor.

The catalysed reaction is beta-L-arabinopyranose = L-ribulose. It participates in carbohydrate degradation; L-arabinose degradation via L-ribulose; D-xylulose 5-phosphate from L-arabinose (bacterial route): step 1/3. In terms of biological role, catalyzes the conversion of L-arabinose to L-ribulose. This chain is L-arabinose isomerase, found in Aeromonas hydrophila subsp. hydrophila (strain ATCC 7966 / DSM 30187 / BCRC 13018 / CCUG 14551 / JCM 1027 / KCTC 2358 / NCIMB 9240 / NCTC 8049).